The primary structure comprises 332 residues: UPF0194 membrane protein YbhG (332 aa).

The signal sequence occupies residues 1-16 (MMKKPVVIGLAVVVLA). The stretch at 107 to 209 (NEEIAQAAAA…LNLQDSTLIA (103 aa)) forms a coiled coil.

It belongs to the UPF0194 family.

It localises to the periplasm. This chain is UPF0194 membrane protein YbhG, found in Escherichia coli (strain K12 / MC4100 / BW2952).